The primary structure comprises 106 residues: ATP-dependent Clp protease adapter protein ClpS (106 aa).

Belongs to the ClpS family. As to quaternary structure, binds to the N-terminal domain of the chaperone ClpA.

Involved in the modulation of the specificity of the ClpAP-mediated ATP-dependent protein degradation. The sequence is that of ATP-dependent Clp protease adapter protein ClpS from Sodalis glossinidius (strain morsitans).